The following is a 171-amino-acid chain: Large ribosomal subunit protein uL10 (171 aa).

It belongs to the universal ribosomal protein uL10 family. Part of the ribosomal stalk of the 50S ribosomal subunit. The N-terminus interacts with L11 and the large rRNA to form the base of the stalk. The C-terminus forms an elongated spine to which L12 dimers bind in a sequential fashion forming a multimeric L10(L12)X complex.

Functionally, forms part of the ribosomal stalk, playing a central role in the interaction of the ribosome with GTP-bound translation factors. The polypeptide is Large ribosomal subunit protein uL10 (Corynebacterium jeikeium (strain K411)).